The sequence spans 158 residues: SsrA-binding protein (158 aa).

Positions 130–158 are disordered; sequence KGKKNHDKREAQAKRDWSRQKQRLLKDHG. Positions 136-158 are enriched in basic and acidic residues; sequence DKREAQAKRDWSRQKQRLLKDHG.

It belongs to the SmpB family.

The protein resides in the cytoplasm. Functionally, required for rescue of stalled ribosomes mediated by trans-translation. Binds to transfer-messenger RNA (tmRNA), required for stable association of tmRNA with ribosomes. tmRNA and SmpB together mimic tRNA shape, replacing the anticodon stem-loop with SmpB. tmRNA is encoded by the ssrA gene; the 2 termini fold to resemble tRNA(Ala) and it encodes a 'tag peptide', a short internal open reading frame. During trans-translation Ala-aminoacylated tmRNA acts like a tRNA, entering the A-site of stalled ribosomes, displacing the stalled mRNA. The ribosome then switches to translate the ORF on the tmRNA; the nascent peptide is terminated with the 'tag peptide' encoded by the tmRNA and targeted for degradation. The ribosome is freed to recommence translation, which seems to be the essential function of trans-translation. This chain is SsrA-binding protein, found in Ruegeria sp. (strain TM1040) (Silicibacter sp.).